The chain runs to 335 residues: Glycerol-3-phosphate dehydrogenase [NAD(P)+] (335 aa).

Position 109 (K109) interacts with NADPH. Sn-glycerol 3-phosphate-binding residues include K109, G141, and S143. A145 provides a ligand contact to NADPH. The sn-glycerol 3-phosphate site is built by K196, D249, S259, R260, and N261. Residue K196 is the Proton acceptor of the active site. R260 provides a ligand contact to NADPH. E283 contributes to the NADPH binding site.

It belongs to the NAD-dependent glycerol-3-phosphate dehydrogenase family.

It localises to the cytoplasm. It carries out the reaction sn-glycerol 3-phosphate + NAD(+) = dihydroxyacetone phosphate + NADH + H(+). It catalyses the reaction sn-glycerol 3-phosphate + NADP(+) = dihydroxyacetone phosphate + NADPH + H(+). The protein operates within membrane lipid metabolism; glycerophospholipid metabolism. Its function is as follows. Catalyzes the reduction of the glycolytic intermediate dihydroxyacetone phosphate (DHAP) to sn-glycerol 3-phosphate (G3P), the key precursor for phospholipid synthesis. In Mycoplasma mobile (strain ATCC 43663 / 163K / NCTC 11711) (Mesomycoplasma mobile), this protein is Glycerol-3-phosphate dehydrogenase [NAD(P)+].